A 947-amino-acid chain; its full sequence is MLDKTYDSAAVEPKIAKAWDEADAFRAGVNAKPDAETFTIVIPPPNVTGSLHMGHALNNTLQDIMVRFERMRGKDVLWQPGMDHAGIATQMVVERQLMERQLPSRRDMGREAFIERVWEWKAESGGLIFNQLKRLGASCDWSRERFTMDEGLSEAVIEVFVSLYKEGLIYRDTRLVNWDPKLQTAISDIEVEPVEVNGHLWHLRYPLEEGVTYQHPVAFDEDGNATEWETRNYLVVATTRPETMLGDTGVAVHPDDVRYKGIVGKHVILPIVGRRIPIVADEYPDPTTGTGAVKMTPAHDFNDFDVGKRQGLRQVNVLTADGRITIKNNEDFLEGLDHPAALHGAWDRLEGKDRFEARKLIVEMLEEAGLVDHIEPHKHMVPHGDRGGVPIEPRLTEQWYVDAKTLAKPAIAAVKEGRTNFVPKNWEKTFFEWMENIQPWCISRQLWWGHQIPAWYGPDGQIFVERNEEEALHAAIQHYIAHEGPMKAYVEDLLENFKPGEILTRDEDVLDTWFSSALWPFSTLGWPKETPELDKYYQTDVLVTGFDIIFFWVARMMMMGLHFMKDADGTPVEPFHTVYVHALVRDKNGQKMSKSKGNVIDPLELIDEYGADALRFTLAIMAAQGRDVKLDPARIAGYRNFGTKLWNATRFAEMNGAISSEGFIPEAASLTINRWILTELSRTIRDVSEAIEDYRFNEAAGALYRFVWNQFCDWYLELLKPVFNGDDEAAKRESQACTAYVLDEIYKLLHPFMPFMTEELWEKTTGPGRERTTLLCHAEWPAAFYADDAAADEINWLIDLVSGIRSVRAEMNVPPAAMAPLVIVGAKALTSERLDRHASAIKRLARVENIEHASVAPRGSAQIVVGEATACLPLGSLIDLGAEKLRLEKAIAKVDVERERILGKLANEKFVANAKPELVEAERERLVELDLQRDSLGVALSRVSEAG.

Residues proline 45–histidine 55 carry the 'HIGH' region motif. Positions lysine 591 to serine 595 match the 'KMSKS' region motif. Lysine 594 is a binding site for ATP.

It belongs to the class-I aminoacyl-tRNA synthetase family. ValS type 1 subfamily. As to quaternary structure, monomer.

The protein localises to the cytoplasm. It catalyses the reaction tRNA(Val) + L-valine + ATP = L-valyl-tRNA(Val) + AMP + diphosphate. Its function is as follows. Catalyzes the attachment of valine to tRNA(Val). As ValRS can inadvertently accommodate and process structurally similar amino acids such as threonine, to avoid such errors, it has a 'posttransfer' editing activity that hydrolyzes mischarged Thr-tRNA(Val) in a tRNA-dependent manner. In Rhizobium meliloti (strain 1021) (Ensifer meliloti), this protein is Valine--tRNA ligase.